The sequence spans 560 residues: Formate--tetrahydrofolate ligase (560 aa).

69-76 (TPAGEGKS) serves as a coordination point for ATP.

The protein belongs to the formate--tetrahydrofolate ligase family.

The catalysed reaction is (6S)-5,6,7,8-tetrahydrofolate + formate + ATP = (6R)-10-formyltetrahydrofolate + ADP + phosphate. It functions in the pathway one-carbon metabolism; tetrahydrofolate interconversion. In Listeria welshimeri serovar 6b (strain ATCC 35897 / DSM 20650 / CCUG 15529 / CIP 8149 / NCTC 11857 / SLCC 5334 / V8), this protein is Formate--tetrahydrofolate ligase.